The chain runs to 462 residues: Retinoic acid receptor alpha (462 aa).

The modulating stretch occupies residues 1–87 (MASNSSSCPT…PPPLPRIYKP (87 aa)). Residues 52-64 (GYSTPSPATIETQ) show a composition bias toward polar residues. The tract at residues 52 to 77 (GYSTPSPATIETQSSSSEEIVPSPPS) is disordered. Serine 77 bears the Phosphoserine; by CDK7 mark. 2 NR C4-type zinc fingers span residues 88-108 (CFVC…CEGC) and 124-148 (CHRD…LQKC). Positions 88–153 (CFVCQDKSSG…RLQKCFEVGM (66 aa)) form a DNA-binding region, nuclear receptor. Residue serine 96 is modified to Phosphoserine; by PKB/AKT1. The hinge stretch occupies residues 154–182 (SKESVRNDRNKKKKEVPKPECSESYTLTP). Residues lysine 166 and lysine 171 each participate in a glycyl lysine isopeptide (Lys-Gly) (interchain with G-Cter in SUMO) cross-link. One can recognise an NR LBD domain in the interval 183–417 (EVGELIEKVR…PLIQEMLENS (235 aa)). Serine 219 carries the phosphoserine; by PKA modification. All-trans-retinoate is bound at residue cysteine 235. The UBR5-degron motif lies at 254 to 258 (IADQI). Residue serine 287 coordinates all-trans-retinoate. Phosphoserine; by PKA is present on serine 369. Residue lysine 399 forms a Glycyl lysine isopeptide (Lys-Gly) (interchain with G-Cter in SUMO) linkage. The tract at residues 404-419 (GSMPPLIQEMLENSEG) is required for binding corepressor NCOR1. Residues 408–416 (PLIQEMLEN) carry the 9aaTAD motif. Positions 419–462 (GLDTLSGQPGGGGRDGGGLAPPPGSCSPSLSPSSNRSSPATHSP) are disordered. Positions 426–437 (QPGGGGRDGGGL) are enriched in gly residues. The span at 444–462 (CSPSLSPSSNRSSPATHSP) shows a compositional bias: low complexity.

The protein belongs to the nuclear hormone receptor family. NR1 subfamily. In terms of assembly, heterodimer; with RXRA (via C-terminus); association with RXRA is enhanced by pulsatile shear stress. Binds DNA preferentially as a heterodimer. RXRA serves as enhancer to induce RARA binding to RARE. Interacts with RXRG. Interacts with coactivators NCOA3 and NCOA6. Interacts with NCOA7; the interaction requires ligand-binding. Interacts (via the ligand-binding domain) with PRAME; the interaction is ligand (retinoic acid)-dependent. Interacts with AKT1; the interaction phosphorylates RARA and represses transactivation. Interacts with PRKAR1A; the interaction negatively regulates RARA transcriptional activity. Interacts with NCOR1 and NCOR2. Interacts with PRMT2. Interacts with LRIF1. Interacts with ASXL1 and NCOA1. Interacts with ACTN4. In a complex with HDAC3, HDAC5 and HDAC7; the HDACs serve as corepressors of RARA, causing its deacetylation and inhibition of RARE DNA element binding; association with HDAC3, HDAC5 and HDAC7 is increased upon oscillatory shear stress. Interacts with CDK7. In the absence of hormonal ligand, interacts with TACC1. In terms of processing, phosphorylated on serine and threonine residues. Phosphorylation does not change during cell cycle. Phosphorylation on Ser-77 is crucial for transcriptional activity. Phosphorylation by AKT1 is required for the repressor activity but has no effect on DNA binding, protein stability nor subcellular localization. Phosphorylated by PKA in vitro. This phosphorylation on Ser-219 and Ser-369 is critical for ligand binding, nuclear localization and transcriptional activity in response to FSH signaling. Sumoylated with SUMO2, mainly on Lys-399 which is also required for SENP6 binding. On all-trans retinoic acid (ATRA) binding, a conformational change may occur that allows sumoylation on two additional site, Lys-166 and Lys-171. Probably desumoylated by SENP6. Sumoylation levels determine nuclear localization and regulate ATRA-mediated transcriptional activity. Post-translationally, trimethylation enhances heterodimerization with RXRA and positively modulates the transcriptional activation. In terms of processing, ubiquitinated by UBR5, leading to its degradation: UBR5 specifically recognizes and binds ligand-bound RARA when it is not associated with coactivators (NCOAs). In presence of NCOAs, the UBR5-degron is not accessible, preventing its ubiquitination and degradation. Acetylated; acetylation is increased upon pulsatile shear stress and decreased upon oscillatory shear stress. In terms of tissue distribution, expressed in monocytes.

The protein localises to the nucleus. It localises to the cytoplasm. Receptor for retinoic acid. Retinoic acid receptors bind as heterodimers to their target response elements in response to their ligands, all-trans or 9-cis retinoic acid, and regulate gene expression in various biological processes. The RXR/RAR heterodimers bind to the retinoic acid response elements (RARE) composed of tandem 5'-AGGTCA-3' sites known as DR1-DR5. In the absence of ligand, the RXR-RAR heterodimers associate with a multiprotein complex containing transcription corepressors that induce histone deacetylation, chromatin condensation and transcriptional suppression. On ligand binding, the corepressors dissociate from the receptors and associate with the coactivators leading to transcriptional activation. Formation of a complex with histone deacetylases might lead to inhibition of RARE DNA element binding and to transcriptional repression. Transcriptional activation and RARE DNA element binding might be supported by the transcription factor KLF2. RARA plays an essential role in the regulation of retinoic acid-induced germ cell development during spermatogenesis. Has a role in the survival of early spermatocytes at the beginning prophase of meiosis. In Sertoli cells, may promote the survival and development of early meiotic prophase spermatocytes. In concert with RARG, required for skeletal growth, matrix homeostasis and growth plate function. Together with RXRA, positively regulates microRNA-10a expression, thereby inhibiting the GATA6/VCAM1 signaling response to pulsatile shear stress in vascular endothelial cells. In association with HDAC3, HDAC5 and HDAC7 corepressors, plays a role in the repression of microRNA-10a and thereby promotes the inflammatory response. In Homo sapiens (Human), this protein is Retinoic acid receptor alpha (RARA).